The following is a 470-amino-acid chain: Nuclear receptor subfamily 0 group B member 1 (470 aa).

Repeat copies occupy residues 1-67 (MAGE…YRCC), 68-133 (FCGK…YRCC), and 134-200 (FCGE…YRCC). The tract at residues 1-253 (MAGENHQWQG…RPVALKSPQV (253 aa)) is 4 X 67 AA tandem repeats. 3 short sequence motifs (LXXLL motif) span residues 13-17 (LYNML), 80-84 (LYSML), and 146-150 (LYSLL). One copy of the 4; truncated repeat lies at 201-253 (FCGEDHPQQGSTLYCVPTSTNQAQAAPEERPRAPWWDTSSGALRPVALKSPQV). The 265-residue stretch at 205–469 (DHPQQGSTLY…DMMLEMLCTK (265 aa)) folds into the NR LBD domain. An AF-2 motif motif is present at residues 461–466 (MMLEML).

It belongs to the nuclear hormone receptor family. NR0 subfamily. In terms of assembly, homodimer. Interacts with NR5A1, NR5A2, NR0B2 and with COPS2. Interacts with ESRRB; represses ESRRB activity at the GATA6 promoter.

The protein localises to the nucleus. It localises to the cytoplasm. In terms of biological role, nuclear receptor that lacks a DNA-binding domain and acts as a corepressor that inhibits the transcriptional activity of other nuclear receptors through heterodimeric interactions. Component of a cascade required for the development of the hypothalamic-pituitary-adrenal-gonadal axis. May also have a role in the development of the embryo and in the maintenance of embryonic stem cell pluripotency. This is Nuclear receptor subfamily 0 group B member 1 (NR0B1) from Homo sapiens (Human).